Reading from the N-terminus, the 42-residue chain is Photosystem II reaction center protein J (42 aa).

Residues 10–30 (IPLWLVGTVAGTAAIGLLGIF) traverse the membrane as a helical segment.

Belongs to the PsbJ family. In terms of assembly, PSII is composed of 1 copy each of membrane proteins PsbA, PsbB, PsbC, PsbD, PsbE, PsbF, PsbH, PsbI, PsbJ, PsbK, PsbL, PsbM, PsbT, PsbX, PsbY, PsbZ, Psb30/Ycf12, at least 3 peripheral proteins of the oxygen-evolving complex and a large number of cofactors. It forms dimeric complexes.

It localises to the plastid. Its subcellular location is the chloroplast thylakoid membrane. In terms of biological role, one of the components of the core complex of photosystem II (PSII). PSII is a light-driven water:plastoquinone oxidoreductase that uses light energy to abstract electrons from H(2)O, generating O(2) and a proton gradient subsequently used for ATP formation. It consists of a core antenna complex that captures photons, and an electron transfer chain that converts photonic excitation into a charge separation. The chain is Photosystem II reaction center protein J from Pleurastrum terricola (Filamentous green alga).